A 239-amino-acid chain; its full sequence is Probable transcriptional regulatory protein BCQ_0605 (239 aa).

Belongs to the TACO1 family. YeeN subfamily.

Its subcellular location is the cytoplasm. The polypeptide is Probable transcriptional regulatory protein BCQ_0605 (Bacillus cereus (strain Q1)).